Here is a 214-residue protein sequence, read N- to C-terminus: Thymidylate kinase (214 aa).

Position 12–19 (12–19) interacts with ATP; sequence GGEGAGKS.

Belongs to the thymidylate kinase family.

The enzyme catalyses dTMP + ATP = dTDP + ADP. Phosphorylation of dTMP to form dTDP in both de novo and salvage pathways of dTTP synthesis. In Gluconobacter oxydans (strain 621H) (Gluconobacter suboxydans), this protein is Thymidylate kinase.